We begin with the raw amino-acid sequence, 214 residues long: Uracil phosphoribosyltransferase (214 aa).

5-phospho-alpha-D-ribose 1-diphosphate-binding positions include R81, R106, and 133–141 (DPMLATGNS). Uracil contacts are provided by residues I196 and 201 to 203 (GDA). 5-phospho-alpha-D-ribose 1-diphosphate is bound at residue D202.

This sequence belongs to the UPRTase family. It depends on Mg(2+) as a cofactor.

It catalyses the reaction UMP + diphosphate = 5-phospho-alpha-D-ribose 1-diphosphate + uracil. Its pathway is pyrimidine metabolism; UMP biosynthesis via salvage pathway; UMP from uracil: step 1/1. Allosterically activated by GTP. In terms of biological role, catalyzes the conversion of uracil and 5-phospho-alpha-D-ribose 1-diphosphate (PRPP) to UMP and diphosphate. This chain is Uracil phosphoribosyltransferase, found in Legionella pneumophila subsp. pneumophila (strain Philadelphia 1 / ATCC 33152 / DSM 7513).